The chain runs to 120 residues: uncharacterized protein (120 aa).

Residues 80–99 (PTRKLQTPLNEPPRTWRKTA) are disordered.

This is an uncharacterized protein from Goose circovirus (GoCV).